Here is a 2332-residue protein sequence, read N- to C-terminus: MHTTDCFIALVHAIREIRALFLPRTTGKMELTLHNGEKKTFYSRPNNHDNCWLNTILQLFRYVDEPFFDWVYNSPENLTLEAINQLEELTGLELHEGGPPALVIWNIKHLLHTGIGTASRPSEVCMVDGTDMCLADFHAGIFLKGQEHAVFACVTSNGWYAIDDEEFYPWTPDPSDVLVFVPYDQEPLNGDWKAMVQRKLKGAGQSSPATGSQNQSGNTGSIINNYYMQQYQNSMDTQLGDNAISGGSNEGSTDTTSTHTTNTQNNDWFSKLASSAFTGLFGALLADKKTEETTLLEDRILTTRNGHTISTTQSSVGVTYGYSTGEDHVAGPNTSGLETRVVQAERFFKKFLFDWTTDKPFGHLEKLELPADHHGVFGHLVESYAYMRNGWDVEVSAVGNQFNGGCLLVAMVPEWKEFEQREKYQLTLFPHQFISPRTNMTAHITVPYLGVNRYDQYKKHKPWTLVVMVVSPLTVSDTAAAQIKVYANIAPTYVHVAGELPSKEGIFPVACSDGYGGLVTTDPKTADPAYGKVYNPPRTNYPGRFTNLLDVAEACPTFLCFDDGKPYVVTRTDDTRLLAKFDVSLAAKHMSNTYLSGIAQYYAQYSGTINLHFMFTGSTDSKARYMVAYIPPGVEVPPDTPERAAHCIHAEWDTGLNSKFTFSIPYVSAADYAYTASDTAETTNVQGWVCIYQITHGKAENDTLVVSASAGKDFELRLPIDPRQQTTAVGESADPVTTTVENYGGETQTQRRHHTDVGFIMDRFVKINSLSPTHVIDLMQTHQHGLVGALLRAATYYFSDLEIVVRHDGNLTWVPNGAPEAALSNTSNPTAYNKAPFTRLALPYTAPHRVLATVYNGTNKYSTGGPRRGDTGSPAARAAKQLPASFNYGAIRAVTIHELLVRMKRAELYCPRPLLAIEVSSQDRHKQKIIAPARQLLNFDLLKLAGDVESNPGPFFFSDVRSNFSKLVETINQMQEDMSTKHGPDFNRLVSAFEELAAGVKAIRTGLDEAKPWYKLIKLLSRLSCMAAVAARSKDPVLVAIMLADTGLEILDSTFVVKKISDSLSSLFHVPAPVFSFGAPILLAGLVKVASSFFRSTPEDLERAEKQLKARDINDIFAILKNGEWLVKLILAIRDWIKAWIASEEKFVTMTDLVPGILEKQHDLNDPSKYKEAKEWLDNARQACLKSGNVHIANLCKVVAPAPSKPRPEPVVVCLRGKSGQGKSFLANVLAQAISTHFTGRTDSVWYCPPDPDHFDGYNQQTVVVMDDLGQNPDGKDFKYFAQMVSTTGFIPPMASLEDKGKPFNSKVIIATTNLYSGFTPRTMVCPDALNRRFHFDIDVSAKDGYKINNKLDITKALEDTHTNPVAMFQYDCALLNGMAVEMKRMQQDMFKPQPPLQNVYQLVQEVIDRVELHEKVSSHPIFKQISIPSQKSVLYFLIKKGQHEAAIEFFEGMVHDSVKEELRPLIQQTSFVKRAFKRLKENFEIVALCLTLLANIVIMIRETRKRQKMVDDAVNEYIEKANITTDDKTLDEAEKNPLETSGASTVGFRERTLPGQKARDDVNSEPAQPAEEQPQAEGPYAGPLERQRPLKVRAKLPQQEGPYAGPMERQKPLKVKAKAPVVKEGPYEGPVKKPVALKVRAKNLIVTESGAPPTDLQKMVMGNTKPVELILDGKTVAICCATGVFGTAYLVPRHLFAEKYDKIMLDGRAMTDSDYRVFEFEIKVKGQDMLSDAALMVLHRGNRVRDITKHFRDTARMKKGTPVVGVINNADVGRLIFSGEALTYKDIVVCMDGDTMPGLFAYRAATKAGYCGGAVLAKDGADTFIVGTHSAGGNGVGYCSCVSRSMLLKMKAHIDPEPHHEGLIVDTRDAEERVHVMRKTKLAPTVAHGVFNPEFGPAALSNKDPRLNEGVVLDEVIFSKHKGDTKMSEEDKALFRRCAADYASRLHSVLGTANAPLSIYEAIKGVDGLDAMEPDTAPGLPWALQGKRRGALIDFENGTVGPEVEAALKLMEKREYKFVCQTFLKDEIRPMEKVRAGKTRIVDVLPVEHILYTRMMIGRFCAQMHSNNGPQIGSAVGCNPDVDWQRFGTHFAQYRNVWDVDYSAFDANHCSDAMNIMFEEVFRTDFGFHPNAEWILKTLVNTEHAYENKRHTVEGGMPSGCSATSIINTILNNIYVLYALRRHYEGVELDTYTMISYGDDIVVASDYDLDFEALKPHFKSLGQTITPADKSDKGFVLGHSITDVTFLKRHFHMDYGTGFYKPVMASKTLEAILSFARRGTIQEKLISVAGLAVHSGPDEYRRLFEPFQGLFEIPSYRSLYLRWVNAVCGDA.

The region spanning methionine 1–lysine 201 is the Peptidase C28 domain. Over methionine 1 to leucine 1480 the chain is Cytoplasmic. Catalysis depends on for leader protease activity residues cysteine 51, histidine 148, and aspartate 163. 2 disordered regions span residues lysine 199–asparagine 218 and glutamine 238–asparagine 265. A lipid anchor (N-myristoyl glycine; by host) is attached at glycine 202. Polar residues-rich tracts occupy residues glycine 204 to asparagine 218 and glutamine 238 to glycine 251. Residues serine 252–asparagine 265 are compositionally biased toward low complexity. An antigenic epitope region spans residues alanine 789–tyrosine 797. Residues arginine 868 to aspartate 870 carry the Cell attachment site motif. The SF3 helicase domain maps to asparagine 1189–aspartate 1353. Residue glycine 1217–serine 1224 coordinates ATP. The stretch at lysine 1481–isoleucine 1501 is an intramembrane region. Residues arginine 1502–alanine 2332 lie on the Cytoplasmic side of the membrane. Basic and acidic residues-rich tracts occupy residues lysine 1529–proline 1538 and phenylalanine 1549–valine 1563. Positions lysine 1529–proline 1584 are disordered. Low complexity predominate over residues glutamate 1566–glutamate 1578. Residues tyrosine 1581, tyrosine 1604, and tyrosine 1628 each carry the O-(5'-phospho-RNA)-tyrosine modification. The Peptidase C3 domain maps to alanine 1652–leucine 1848. Histidine 1695 (for protease 3C activity; Proton donor/acceptor) is an active-site residue. Active-site for protease 3C activity residues include aspartate 1733 and cysteine 1812. The Nuclear localization signal motif lies at methionine 1878–threonine 1886. A RdRp catalytic domain is found at arginine 2096–alanine 2214. Aspartate 2200 (for RdRp activity) is an active-site residue.

Belongs to the picornaviruses polyprotein family. In terms of assembly, interacts with host ISG15. Capsid protein VP1: Interacts (via R-G-D motif) with host ITGAV/ITGB6. Interacts (via R-G-D motif) with host ITGAV/ITGB6. Interacts with host MAVS; this interaction inhibits binding of host TRAF3 to MAVS, thereby suppressing interferon-mediated responses. As to quaternary structure, forms homooligomers. In terms of assembly, homohexamer. Interacts with host VIM. Interacts with host BECN1. Interacts with host DCTN3. As to quaternary structure, interacts with RNA-dependent RNA polymerase; this interaction allows 3B-1 to binds 2 polymerases and act as a primer. It also allows the recruitment of the RNA-dependent RNA polymerase to host membranes. In terms of assembly, interacts with RNA-dependent RNA polymerase; this interaction allows 3B-2 to act as a primer. Interacts with RNA-dependent RNA polymerase; this interaction allows 3B-3 to act as a primer. As to quaternary structure, interacts with 3B-1; this interaction allows 3B-1 to binds 2 polymerases and act as a primer. It also allows the recruitment of the RNA-dependent RNA polymerase to host membranes. Interacts with 3B-2; this interaction allows 3B-2 to act as a primer. Interacts with 3B-3; this interaction allows 3B-3 to act as a primer. Removes six residues from its own C-terminus, generating sLb(pro). In terms of processing, specific enzymatic cleavages in vivo by the viral proteases yield a variety of precursors and mature proteins. The polyprotein seems to be cotranslationally cleaved at the 2A/2B junction by a ribosomal skip from one codon to the next without formation of a peptide bond. This process would release the L-P1-2A peptide from the translational complex. Post-translationally, during virion maturation, immature virions are rendered infectious following cleavage of VP0 into VP4 and VP2. This maturation seems to be an autocatalytic event triggered by the presence of RNA in the capsid and is followed by a conformational change of the particle. Myristoylation is required during RNA encapsidation and formation of the mature virus particle. In terms of processing, uridylylated by the polymerase and covalently linked to the 5'-end of genomic RNA. These uridylylated forms act as a nucleotide-peptide primer for the polymerase.

It localises to the host nucleus. The protein resides in the host cytoplasm. It is found in the virion. Its subcellular location is the host endoplasmic reticulum membrane. The protein localises to the host cytoplasmic vesicle membrane. The enzyme catalyses Autocatalytically cleaves itself from the polyprotein of the foot-and-mouth disease virus by hydrolysis of a Lys-|-Gly bond, but then cleaves host cell initiation factor eIF-4G at bonds -Gly-|-Arg- and -Lys-|-Arg-.. It carries out the reaction a ribonucleoside 5'-triphosphate + H2O = a ribonucleoside 5'-diphosphate + phosphate + H(+). The catalysed reaction is RNA(n) + a ribonucleoside 5'-triphosphate = RNA(n+1) + diphosphate. It catalyses the reaction Selective cleavage of Gln-|-Gly bond in the poliovirus polyprotein. In other picornavirus reactions Glu may be substituted for Gln, and Ser or Thr for Gly.. Autocatalytically cleaves itself from the polyprotein at the L/VP0 junction. Also cleaves the host translation initiation factors EIF4G1 and EIF4G3, in order to shut off the capped cellular mRNA transcription. Plays a role in counteracting host innate antiviral response using diverse mechanisms. Possesses a deubiquitinase activity acting on both 'Lys-48' and 'Lys-63'-linked polyubiquitin chains. In turn, inhibits the ubiquitination and subsequent activation of key signaling molecules of type I IFN response such as host RIGI, TBK1, TRAF3 and TRAF6. Inhibits host NF-kappa-B activity by inducing a decrease in RELA mRNA levels. Cleaves a peptide bond in the C-terminus of host ISG15, resulting in the damaging of this modifier that can no longer be attached to target proteins. Also cleaves host G3BP1 and G3BP2 in order to inhibit cytoplasmic stress granules assembly. Its function is as follows. Lies on the inner surface of the capsid shell. After binding to the host receptor, the capsid undergoes conformational changes. Capsid protein VP4 is released, capsid protein VP1 N-terminus is externalized, and together, they shape a pore in the host membrane through which the viral genome is translocated into the host cell cytoplasm. After genome has been released, the channel shrinks. Functionally, forms an icosahedral capsid of pseudo T=3 symmetry with capsid proteins VP1 and VP3. The capsid is composed of 60 copies of each capsid protein organized in the form of twelve pentamers and encloses the viral positive strand RNA genome. Upon acidifcation in the endosome, dissociates into pentamers. In terms of biological role, forms an icosahedral capsid of pseudo T=3 symmetry with capsid proteins VP0 and VP3. The capsid is composed of 60 copies of each capsid protein organized in the form of twelve pentamers and encloses the viral positive strand RNA genome. Upon acidifcation in the endosome, dissociates into pentamers. Forms an icosahedral capsid of pseudo T=3 symmetry with capsid proteins VP2 and VP3. The capsid is composed of 60 copies of each capsid protein organized in the form of twelve pentamers and encloses the viral positive strand RNA genome. Mediates cell entry by attachment to an integrin receptor, usually host ITGAV/ITGB6. In addition, targets host MAVS to suppress type I IFN pathway. Upon acidifcation in the endosome, dissociates into pentamers. Its function is as follows. Mediates self-processing of the polyprotein by a translational effect termed 'ribosome skipping'. Mechanistically, 2A-mediated cleavage occurs between the C-terminal glycine and the proline of the downstream protein 2B. In the case of foot-and-mouth disease virus, the 2A oligopeptide is post-translationally 'trimmed' from the C-terminus of the upstream protein 1D by 3C proteinase. Functionally, plays an essential role in the virus replication cycle by acting as a viroporin. Creates a pore in the host endoplasmic reticulum and as a consequence releases Ca2+ in the cytoplasm of infected cell. In turn, high levels of cytoplasmic calcium may trigger membrane trafficking and transport of viral ER-associated proteins to viroplasms, sites of viral genome replication. In terms of biological role, associates with and induces structural rearrangements of intracellular membranes. Triggers host autophagy by interacting with host BECN1 and thereby promotes viral replication. Participates in viral replication and interacts with host DHX9. Displays RNA-binding, nucleotide binding and NTPase activities. May play a role in virion morphogenesis and viral RNA encapsidation by interacting with the capsid protein VP3. Plays important roles in virus replication, virulence and host range. Cooperates with host DDX56 to inhibit IRF3 nuclear translocation and subsequent type I interferon production. Its function is as follows. Covalently linked to the 5'-end of both the positive-strand and negative-strand genomic RNAs. Acts as a genome-linked replication primer. Functionally, cysteine protease that generates mature viral proteins from the precursor polyprotein. In addition to its proteolytic activity, binds to viral RNA and thus influences viral genome replication. RNA and substrate bind cooperatively to the protease. In terms of biological role, RNA-directed RNA polymerase 3D-POL replicates genomic and antigenomic RNA by recognizing replications specific signals. Covalently attaches UMP to a tyrosine of VPg, which is used to prime RNA synthesis. The positive stranded RNA genome is first replicated at virus induced membranous vesicles, creating a dsRNA genomic replication form. This dsRNA is then used as template to synthesize positive stranded RNA genomes. ss(+)RNA genomes are either translated, replicated or encapsidated. This is Genome polyprotein from Foot-and-mouth disease virus (isolate -/Germany/A5Westerwald/1951 serotype A) (FMDV).